Reading from the N-terminus, the 247-residue chain is Ribonuclease PH (247 aa).

Phosphate is bound by residues arginine 90 and 128–130 (GTR).

The protein belongs to the RNase PH family. Homohexameric ring arranged as a trimer of dimers.

It carries out the reaction tRNA(n+1) + phosphate = tRNA(n) + a ribonucleoside 5'-diphosphate. Its function is as follows. Phosphorolytic 3'-5' exoribonuclease that plays an important role in tRNA 3'-end maturation. Removes nucleotide residues following the 3'-CCA terminus of tRNAs; can also add nucleotides to the ends of RNA molecules by using nucleoside diphosphates as substrates, but this may not be physiologically important. Probably plays a role in initiation of 16S rRNA degradation (leading to ribosome degradation) during starvation. This Synechococcus sp. (strain CC9605) protein is Ribonuclease PH.